We begin with the raw amino-acid sequence, 100 residues long: MNRLSASERQAALRELPGWLELEEREAIGRSYQFKDFSEAFGFMTRVALAAEKADHHPEWRNVYRTVDVVLTTHDAGGVTERDVKLAKAMDAIAERCGAR.

Belongs to the pterin-4-alpha-carbinolamine dehydratase family.

It catalyses the reaction (4aS,6R)-4a-hydroxy-L-erythro-5,6,7,8-tetrahydrobiopterin = (6R)-L-erythro-6,7-dihydrobiopterin + H2O. This is Putative pterin-4-alpha-carbinolamine dehydratase from Rhodopseudomonas palustris (strain ATCC BAA-98 / CGA009).